A 222-amino-acid chain; its full sequence is 7-cyano-7-deazaguanine synthase (222 aa).

Residue 9–19 (LSGGLDSATAA) coordinates ATP. Cysteine 190, cysteine 198, cysteine 201, and cysteine 204 together coordinate Zn(2+).

Belongs to the QueC family. Zn(2+) is required as a cofactor.

It carries out the reaction 7-carboxy-7-deazaguanine + NH4(+) + ATP = 7-cyano-7-deazaguanine + ADP + phosphate + H2O + H(+). Its pathway is purine metabolism; 7-cyano-7-deazaguanine biosynthesis. Catalyzes the ATP-dependent conversion of 7-carboxy-7-deazaguanine (CDG) to 7-cyano-7-deazaguanine (preQ(0)). This Synechococcus sp. (strain RCC307) protein is 7-cyano-7-deazaguanine synthase.